The primary structure comprises 351 residues: MKGIIYLEDGTVFYGTGFGKEGNEFGEIVFNTSMTGYQEILTDPSYAGQIINMTYPLIGNYGVNESVNQSKCVYAKGFIVKNIDENPSNYTSEINIDQMLKNMGVVGVFGVDTRSITKKIRSYGTMKCIISNGELSIEELKKMMDASNIVDDYVNTVSTKEIIHIAGNGNKVAVMDFGIKNDIIENLKERQCDITIFPYDTDYNEILNINPDGIFLSNGPGDPKSIPEAIENVKKLIGKRPMFGICLGHQIIALASGGNTYKLKYGHRGGNHGIYDVQRDKAYITAQNHGYAVDEESVLENGMIITHRNLNDGTVEGMKHKSIPLFSVQFHPEGAPGPTDTTYLFDQFVNL.

The CPSase stretch occupies residues 1-171; the sequence is MKGIIYLEDG…IIHIAGNGNK (171 aa). The L-glutamine site is built by S45, G219, and G221. Positions 171–351 constitute a Glutamine amidotransferase type-1 domain; the sequence is KVAVMDFGIK…TYLFDQFVNL (181 aa). The active-site Nucleophile is the C246. 5 residues coordinate L-glutamine: L247, Q250, N288, G290, and Y291. Active-site residues include H331 and E333.

Belongs to the CarA family. Composed of two chains; the small (or glutamine) chain promotes the hydrolysis of glutamine to ammonia, which is used by the large (or ammonia) chain to synthesize carbamoyl phosphate. Tetramer of heterodimers (alpha,beta)4.

The catalysed reaction is hydrogencarbonate + L-glutamine + 2 ATP + H2O = carbamoyl phosphate + L-glutamate + 2 ADP + phosphate + 2 H(+). It carries out the reaction L-glutamine + H2O = L-glutamate + NH4(+). Its pathway is amino-acid biosynthesis; L-arginine biosynthesis; carbamoyl phosphate from bicarbonate: step 1/1. It functions in the pathway pyrimidine metabolism; UMP biosynthesis via de novo pathway; (S)-dihydroorotate from bicarbonate: step 1/3. In terms of biological role, small subunit of the glutamine-dependent carbamoyl phosphate synthetase (CPSase). CPSase catalyzes the formation of carbamoyl phosphate from the ammonia moiety of glutamine, carbonate, and phosphate donated by ATP, constituting the first step of 2 biosynthetic pathways, one leading to arginine and/or urea and the other to pyrimidine nucleotides. The small subunit (glutamine amidotransferase) binds and cleaves glutamine to supply the large subunit with the substrate ammonia. In Clostridium acetobutylicum (strain ATCC 824 / DSM 792 / JCM 1419 / IAM 19013 / LMG 5710 / NBRC 13948 / NRRL B-527 / VKM B-1787 / 2291 / W), this protein is Carbamoyl phosphate synthase small chain.